Consider the following 226-residue polypeptide: PKHD-type hydroxylase PFL_0865 (226 aa).

The region spanning 78-178 (KVFPPLINCY…RYASFFWTQS (101 aa)) is the Fe2OG dioxygenase domain. Residues His96, Asp98, and His159 each coordinate Fe cation. Arg169 provides a ligand contact to 2-oxoglutarate.

The cofactor is Fe(2+). L-ascorbate is required as a cofactor.

The chain is PKHD-type hydroxylase PFL_0865 from Pseudomonas fluorescens (strain ATCC BAA-477 / NRRL B-23932 / Pf-5).